A 134-amino-acid chain; its full sequence is Viral interleukin-8 homolog (134 aa).

Positions 1–22 (MQALLLVLVLFIVQIYLLPGNG) are cleaved as a signal peptide.

Belongs to the intercrine alpha (chemokine CxC) family. As to quaternary structure, homodimer.

The protein localises to the secreted. In terms of biological role, plays a role in the early phase of cytolytic infections presumably by recruiting host B or T-lymphocytes. In Gallus gallus (Chicken), this protein is Viral interleukin-8 homolog (MDV078).